Reading from the N-terminus, the 636-residue chain is Threonine--tRNA ligase (636 aa).

In terms of domain architecture, TGS spans 1–63; it reads MINITTSFPN…SKDGSVDPVT (63 aa). Residues 244–535 form a catalytic region; that stretch reads DHRKIAKDLG…LIEHYAGNIP (292 aa). Residues C335, H386, and H512 each contribute to the Zn(2+) site.

This sequence belongs to the class-II aminoacyl-tRNA synthetase family. In terms of assembly, homodimer. Requires Zn(2+) as cofactor.

The protein resides in the cytoplasm. It carries out the reaction tRNA(Thr) + L-threonine + ATP = L-threonyl-tRNA(Thr) + AMP + diphosphate + H(+). Functionally, catalyzes the attachment of threonine to tRNA(Thr) in a two-step reaction: L-threonine is first activated by ATP to form Thr-AMP and then transferred to the acceptor end of tRNA(Thr). Also edits incorrectly charged L-seryl-tRNA(Thr). The polypeptide is Threonine--tRNA ligase (Anaplasma marginale (strain St. Maries)).